The sequence spans 292 residues: Tumor necrosis factor alpha-induced protein 8-like protein 3 (292 aa).

A disordered region spans residues 81-107; the sequence is DAQPAARSMDSDSGEQSEGEPVTAAGP. The interval 109 to 292 is binding to phosphoinositides; that stretch reads VFSSKSLALQ…INKLLDEKVL (184 aa).

The protein belongs to the TNFAIP8 family. In terms of tissue distribution, widely expressed (at protein level). Highly expressed in most carcinoma cell lines.

It is found in the cytoplasm. The protein localises to the cell membrane. Functionally, acts as a lipid transfer protein. Preferentially captures and shuttles two lipid second messengers, i.e., phosphatidylinositol 4,5- bisphosphate and phosphatidylinositol 3,4,5-trisphosphate and increases their levels in the plasma membrane. Additionally, may also function as a lipid-presenting protein to enhance the activity of the PI3K-AKT and MEK-ERK pathways. May act as a regulator of tumorigenesis through its activation of phospholipid signaling. The polypeptide is Tumor necrosis factor alpha-induced protein 8-like protein 3 (TNFAIP8L3) (Homo sapiens (Human)).